Consider the following 395-residue polypeptide: Accessory Sec system protein translocase subunit SecY2 (395 aa).

10 consecutive transmembrane segments (helical) span residues 13–33 (VSFSLFIVIIYVMGLYIPLPF), 63–83 (ISIFSIGLNPLMFSMLIIQLL), 102–122 (LMQFLTMIITIIQAALLVFAF), 128–148 (GLEDFEMILILSAGSCLVVWL), 157–177 (VGASAPVILTSILNGAIPNII), 190–210 (WIWLAALAIFILLLIKFWLAF), 239–259 (MAAMMMYMVGMAILTLPLMVG), 272–292 (VFQASFSAVMGILIFYFFTFV), 326–346 (LIWIIAFPGAVLNAFQLVFGL), and 355–375 (YAGFAIIPMNVVMITMFMGGI).

This sequence belongs to the SecY/SEC61-alpha family. SecY2 subfamily. Component of the accessory SecA2/SecY2 protein translocase complex required to export cell wall proteins. May form heterotrimers with SecE and SecG subunits.

It is found in the cell membrane. Functionally, part of the accessory SecA2/SecY2 system specifically required for export of possible cell wall proteins. The central subunit of a protein translocation channel. This is Accessory Sec system protein translocase subunit SecY2 from Lactobacillus johnsonii (strain CNCM I-12250 / La1 / NCC 533).